The chain runs to 578 residues: Solute carrier family 15 member 3 (578 aa).

The segment covering 1–15 has biased composition (basic and acidic residues); it reads MSAPRAEEQPSRSGE. The interval 1–27 is disordered; the sequence is MSAPRAEEQPSRSGERQPLVARGPRGP. The next 5 membrane-spanning stretches (helical) occupy residues 33 to 53, 77 to 97, 102 to 122, 155 to 175, and 201 to 221; these read TAAA…FGVT, LLFL…ADVY, LTIS…LTTI, PYCA…ASSV, and WFYW…AFIE. N-linked (GlcNAc...) asparagine glycosylation is present at Asn-223. The chain crosses the membrane as a helical span at residues 232–252; it reads IIVGLVGLAFFIFLFATPVFI. The interval 280 to 301 is disordered; the sequence is SRDSESAHLLPDQRSNQPGPSP. The chain crosses the membrane as a helical span at residues 308 to 328; the sequence is FQVLVKILPVMVTLVPYWMVY. Asn-353 carries an N-linked (GlcNAc...) asparagine glycan. 2 helical membrane-spanning segments follow: residues 367-387 and 405-425; these read IPEA…IPVK and LQKM…AGVL. Asn-436 is a glycosylation site (N-linked (GlcNAc...) asparagine). The next 3 helical transmembrane spans lie at 462 to 481, 494 to 514, and 538 to 558; these read YLLI…EFAY, GIFF…VALL, and YFFL…WIAG.

The protein belongs to the major facilitator superfamily. Proton-dependent oligopeptide transporter (POT/PTR) (TC 2.A.17) family. As to expression, expressed highly in bone marrow derived macrophages, and weakly in spleen and lung. Expressed in plasmacytoid dendritic cells (pDCs) in response to toll-like receptors (TLR) stimulation.

The protein localises to the lysosome membrane. It is found in the endosome membrane. It catalyses the reaction N-acetyl-D-muramoyl-L-alanyl-D-isoglutamine(out) + n H(+)(out) = N-acetyl-D-muramoyl-L-alanyl-D-isoglutamine(in) + n H(+)(in). The catalysed reaction is glycylglycylglycine(out) + n H(+)(out) = glycylglycylglycine(in) + n H(+)(in). The enzyme catalyses carnosine(out) + n H(+)(out) = carnosine(in) + n H(+)(in). It carries out the reaction L-histidine(out) + n H(+)(out) = L-histidine(in) + n H(+)(in). Functionally, proton-coupled amino-acid transporter that transports free histidine and certain di- and tripeptides, and is involved in innate immune response. Also able to transport carnosine. Involved in the detection of microbial pathogens by toll-like receptors (TLRs) and NOD-like receptors (NLRs), probably by mediating transport of bacterial peptidoglycans across the endolysosomal membrane: catalyzes the transport of certain bacterial peptidoglycans, such as muramyl dipeptide (MDP), the NOD2 ligand. The polypeptide is Solute carrier family 15 member 3 (Mus musculus (Mouse)).